The primary structure comprises 235 residues: Proteasome subunit alpha (235 aa).

Belongs to the peptidase T1A family. In terms of assembly, the 20S proteasome core is composed of 14 alpha and 14 beta subunits that assemble into four stacked heptameric rings, resulting in a barrel-shaped structure. The two inner rings, each composed of seven catalytic beta subunits, are sandwiched by two outer rings, each composed of seven alpha subunits. The catalytic chamber with the active sites is on the inside of the barrel. Has a gated structure, the ends of the cylinder being occluded by the N-termini of the alpha-subunits. Is capped by the proteasome-associated ATPase, ARC.

The protein resides in the cytoplasm. It participates in protein degradation; proteasomal Pup-dependent pathway. With respect to regulation, the formation of the proteasomal ATPase ARC-20S proteasome complex, likely via the docking of the C-termini of ARC into the intersubunit pockets in the alpha-rings, may trigger opening of the gate for substrate entry. Interconversion between the open-gate and close-gate conformations leads to a dynamic regulation of the 20S proteasome proteolysis activity. Its function is as follows. Component of the proteasome core, a large protease complex with broad specificity involved in protein degradation. The sequence is that of Proteasome subunit alpha from Paenarthrobacter aurescens (strain TC1).